We begin with the raw amino-acid sequence, 191 residues long: MEYFDMRKMSVNLWRNAAGETREICTFPPAKRDFYWRASIASIAANGEFSLFPGMERIVTLLEGGEMFLESTDRFNHTLKPLQPFAFAADQVVKAKLTAGQMSMDFNIMTRLDVCKAKVRIAERTFTTFGSRGGVVFVINGAWQLGDKLLTTDQGACWFDGRHTLRLLQPQGKLLFSEINWLAGHSPDQVQ.

The protein belongs to the Ves family.

The sequence is that of Protein Ves from Escherichia coli O7:K1 (strain IAI39 / ExPEC).